A 292-amino-acid polypeptide reads, in one-letter code: Histamine N-methyltransferase (292 aa).

Position 28 (glutamate 28) interacts with substrate. Residues glycine 60, glutamate 89, glutamine 94, serine 120, and isoleucine 142 each coordinate S-adenosyl-L-methionine. Substrate is bound at residue asparagine 283.

The protein belongs to the class I-like SAM-binding methyltransferase superfamily. HNMT family. Monomer.

It localises to the cytoplasm. It carries out the reaction histamine + S-adenosyl-L-methionine = N(tau)-methylhistamine + S-adenosyl-L-homocysteine + H(+). Its function is as follows. Inactivates histamine by N-methylation. Plays an important role in degrading histamine and in regulating the airway response to histamine. The polypeptide is Histamine N-methyltransferase (HNMT) (Homo sapiens (Human)).